The sequence spans 314 residues: UDP-N-acetylenolpyruvoylglucosamine reductase (314 aa).

Residues Lys25 to Gly191 form the FAD-binding PCMH-type domain. Arg170 is a catalytic residue. The active-site Proton donor is the Ser220. Glu291 is an active-site residue.

The protein belongs to the MurB family. FAD is required as a cofactor.

Its subcellular location is the cytoplasm. It carries out the reaction UDP-N-acetyl-alpha-D-muramate + NADP(+) = UDP-N-acetyl-3-O-(1-carboxyvinyl)-alpha-D-glucosamine + NADPH + H(+). The protein operates within cell wall biogenesis; peptidoglycan biosynthesis. Its function is as follows. Cell wall formation. The chain is UDP-N-acetylenolpyruvoylglucosamine reductase from Heliobacterium modesticaldum (strain ATCC 51547 / Ice1).